The primary structure comprises 554 residues: Beta-eudesmol synthase (554 aa).

3 residues coordinate Mg(2+): D305, D309, and E456. Positions 305-309 (DDIYD) match the DDXXD motif motif.

This sequence belongs to the terpene synthase family. It depends on Mg(2+) as a cofactor. Requires Mn(2+) as cofactor. Expressed in rhizomes. Detected in stems, but not in leaves.

Its subcellular location is the cytoplasm. It carries out the reaction (2E,6E)-farnesyl diphosphate + H2O = beta-eudesmol + diphosphate. The enzyme catalyses (2E,6E)-farnesyl diphosphate + H2O = 10-epi-gamma-eudesmol + diphosphate. The catalysed reaction is (2E,6E)-farnesyl diphosphate + H2O = alpha-eudesmol + diphosphate. It participates in secondary metabolite biosynthesis; terpenoid biosynthesis. Involved in the biosynthesis of beta-eudesmol, a sesquiterpene with antifungal activity and responsible for resistance of plants to ant attack. Produces mainly beta-eudesmol, but also smaller amounts of 10-epi-gamma-eudesmol, alpha-eudesmol and aristolene. This is Beta-eudesmol synthase (ZSS2) from Zingiber zerumbet (Shampoo ginger).